A 559-amino-acid chain; its full sequence is (-)-drimenol synthase (559 aa).

Asp311, Asp315, Asp456, Ser460, and Glu464 together coordinate Mg(2+). The DDXXD motif motif lies at Asp311–Asp315.

Belongs to the terpene synthase family. Mg(2+) is required as a cofactor.

It carries out the reaction (2E,6E)-farnesyl diphosphate + H2O = (5S,9S,10S)-drim-7-en-11-ol + diphosphate. It participates in secondary metabolite biosynthesis; terpenoid biosynthesis. Functionally, catalyzes the conversion of (2E,6E)-farnesyl diphosphate (FPP) into drimenol, a precursor of the sesquiterpenoid polygodial. Polygodial has been shown to be an antifeedant for a number of herbivorous insects. The chain is (-)-drimenol synthase from Persicaria hydropiper (Marshpepper knotweed).